The primary structure comprises 210 residues: Proteasome subunit beta (210 aa).

Residues 1-9 (MNDKNTLKG) constitute a propeptide, removed in mature form; by autocatalysis. The Nucleophile role is filled by threonine 10.

It belongs to the peptidase T1B family. As to quaternary structure, the 20S proteasome core is composed of 14 alpha and 14 beta subunits that assemble into four stacked heptameric rings, resulting in a barrel-shaped structure. The two inner rings, each composed of seven catalytic beta subunits, are sandwiched by two outer rings, each composed of seven alpha subunits. The catalytic chamber with the active sites is on the inside of the barrel. Has a gated structure, the ends of the cylinder being occluded by the N-termini of the alpha-subunits. Is capped at one or both ends by the proteasome regulatory ATPase, PAN.

The protein resides in the cytoplasm. It catalyses the reaction Cleavage of peptide bonds with very broad specificity.. The formation of the proteasomal ATPase PAN-20S proteasome complex, via the docking of the C-termini of PAN into the intersubunit pockets in the alpha-rings, triggers opening of the gate for substrate entry. Interconversion between the open-gate and close-gate conformations leads to a dynamic regulation of the 20S proteasome proteolysis activity. In terms of biological role, component of the proteasome core, a large protease complex with broad specificity involved in protein degradation. This Methanothermobacter thermautotrophicus (strain ATCC 29096 / DSM 1053 / JCM 10044 / NBRC 100330 / Delta H) (Methanobacterium thermoautotrophicum) protein is Proteasome subunit beta.